We begin with the raw amino-acid sequence, 245 residues long: Ribonuclease PH (245 aa).

Residues R86 and 124–126 (GTR) each bind phosphate.

It belongs to the RNase PH family. In terms of assembly, homohexameric ring arranged as a trimer of dimers.

It carries out the reaction tRNA(n+1) + phosphate = tRNA(n) + a ribonucleoside 5'-diphosphate. In terms of biological role, phosphorolytic 3'-5' exoribonuclease that plays an important role in tRNA 3'-end maturation. Removes nucleotide residues following the 3'-CCA terminus of tRNAs; can also add nucleotides to the ends of RNA molecules by using nucleoside diphosphates as substrates, but this may not be physiologically important. Probably plays a role in initiation of 16S rRNA degradation (leading to ribosome degradation) during starvation. The protein is Ribonuclease PH of Bacillus cereus (strain G9842).